Consider the following 123-residue polypeptide: Basic myotoxic phospholipase A2 PhTX-II (123 aa).

Cystine bridges form between C26-C116, C28-C45, C44-C95, C50-C123, C51-C88, C58-C81, and C75-C86. 3 residues coordinate Ca(2+): Y27, G29, and G31. H48 is an active-site residue. Residue D49 participates in Ca(2+) binding. The active site involves D89.

Monomer. Requires Ca(2+) as cofactor. Expressed by the venom gland.

The protein resides in the secreted. It catalyses the reaction a 1,2-diacyl-sn-glycero-3-phosphocholine + H2O = a 1-acyl-sn-glycero-3-phosphocholine + a fatty acid + H(+). Its activity is regulated as follows. P-bromophenacyl bromide (BPB) completely inhibits the catalytic and edematogenic activities. Enzymatic activity is also diminished by EDTA, heparin and crotapotins F2 and F3 from C.d.collilineatus. Inhibited by divalent cations different from calcium ions (cadmium, magnesium, manganese, zinc), since they act as competitive antagonists of this cofactor. In terms of biological role, snake venom phospholipase A2 (PLA2) that induces myotoxicity and local edema in mice. In addition, it causes neuromuscular blockade in avian neuromuscular preparations with a significant direct action on skeletal muscle function. Myotoxic action is exerted by both enzymatic and non-enzymatic mechanisms. PLA2 catalyzes the calcium-dependent hydrolysis of the 2-acyl groups in 3-sn-phosphoglycerides. The polypeptide is Basic myotoxic phospholipase A2 PhTX-II (Bothrocophias hyoprora (Amazonian hognose viper)).